Consider the following 140-residue polypeptide: 3-hydroxyacyl-[acyl-carrier-protein] dehydratase FabZ (140 aa).

H48 is an active-site residue.

Belongs to the thioester dehydratase family. FabZ subfamily.

It is found in the cytoplasm. It catalyses the reaction a (3R)-hydroxyacyl-[ACP] = a (2E)-enoyl-[ACP] + H2O. Involved in unsaturated fatty acids biosynthesis. Catalyzes the dehydration of short chain beta-hydroxyacyl-ACPs and long chain saturated and unsaturated beta-hydroxyacyl-ACPs. This is 3-hydroxyacyl-[acyl-carrier-protein] dehydratase FabZ from Exiguobacterium sibiricum (strain DSM 17290 / CCUG 55495 / CIP 109462 / JCM 13490 / 255-15).